Reading from the N-terminus, the 179-residue chain is Small ribosomal subunit protein uS5 (179 aa).

In terms of domain architecture, S5 DRBM spans 13 to 76; sequence LDERVVLINR…EAAKRNLIRV (64 aa). Positions 160–179 are disordered; it reads DMTPQELNARRMRRETTEAA.

The protein belongs to the universal ribosomal protein uS5 family. Part of the 30S ribosomal subunit. Contacts proteins S4 and S8.

With S4 and S12 plays an important role in translational accuracy. Its function is as follows. Located at the back of the 30S subunit body where it stabilizes the conformation of the head with respect to the body. This is Small ribosomal subunit protein uS5 from Chloroflexus aggregans (strain MD-66 / DSM 9485).